A 308-amino-acid polypeptide reads, in one-letter code: Elongation factor Ts (308 aa).

The involved in Mg(2+) ion dislocation from EF-Tu stretch occupies residues 80 to 83; it reads TDFV.

The protein belongs to the EF-Ts family.

It is found in the cytoplasm. Associates with the EF-Tu.GDP complex and induces the exchange of GDP to GTP. It remains bound to the aminoacyl-tRNA.EF-Tu.GTP complex up to the GTP hydrolysis stage on the ribosome. This Rhodopseudomonas palustris (strain ATCC BAA-98 / CGA009) protein is Elongation factor Ts.